We begin with the raw amino-acid sequence, 310 residues long: 4-hydroxythreonine-4-phosphate dehydrogenase (310 aa).

Substrate contacts are provided by H126 and T127. A divalent metal cation is bound by residues H156, H195, and H251. Substrate contacts are provided by K259, N268, and R277.

This sequence belongs to the PdxA family. Homodimer. Requires Zn(2+) as cofactor. The cofactor is Mg(2+). It depends on Co(2+) as a cofactor.

Its subcellular location is the cytoplasm. The enzyme catalyses 4-(phosphooxy)-L-threonine + NAD(+) = 3-amino-2-oxopropyl phosphate + CO2 + NADH. It functions in the pathway cofactor biosynthesis; pyridoxine 5'-phosphate biosynthesis; pyridoxine 5'-phosphate from D-erythrose 4-phosphate: step 4/5. In terms of biological role, catalyzes the NAD(P)-dependent oxidation of 4-(phosphooxy)-L-threonine (HTP) into 2-amino-3-oxo-4-(phosphooxy)butyric acid which spontaneously decarboxylates to form 3-amino-2-oxopropyl phosphate (AHAP). In Helicobacter acinonychis (strain Sheeba), this protein is 4-hydroxythreonine-4-phosphate dehydrogenase.